Here is a 226-residue protein sequence, read N- to C-terminus: Sugar fermentation stimulation protein homolog (226 aa).

The protein belongs to the SfsA family.

The polypeptide is Sugar fermentation stimulation protein homolog (Clostridium beijerinckii (strain ATCC 51743 / NCIMB 8052) (Clostridium acetobutylicum)).